We begin with the raw amino-acid sequence, 1385 residues long: DNA-directed RNA polymerase subunit beta' (1385 aa).

Positions 72, 74, 87, and 90 each coordinate Zn(2+). Mg(2+)-binding residues include Asp-467, Asp-469, and Asp-471. Cys-829, Cys-910, Cys-917, and Cys-920 together coordinate Zn(2+).

This sequence belongs to the RNA polymerase beta' chain family. In terms of assembly, the RNAP catalytic core consists of 2 alpha, 1 beta, 1 beta' and 1 omega subunit. When a sigma factor is associated with the core the holoenzyme is formed, which can initiate transcription. It depends on Mg(2+) as a cofactor. The cofactor is Zn(2+).

The catalysed reaction is RNA(n) + a ribonucleoside 5'-triphosphate = RNA(n+1) + diphosphate. Its function is as follows. DNA-dependent RNA polymerase catalyzes the transcription of DNA into RNA using the four ribonucleoside triphosphates as substrates. The polypeptide is DNA-directed RNA polymerase subunit beta' (Elusimicrobium minutum (strain Pei191)).